A 1481-amino-acid polypeptide reads, in one-letter code: Cystic fibrosis transmembrane conductance regulator (1481 aa).

The Cytoplasmic portion of the chain corresponds to 1–77 (MQRSPLEKAS…KLINALRRCF (77 aa)). Residues 78 to 98 (FWRFMFYGILLYLGEVTKAVQ) form a helical membrane-spanning segment. One can recognise an ABC transmembrane type-1 1 domain in the interval 81-365 (FMFYGILLYL…WAVQTWYDSL (285 aa)). Residues 99 to 122 (PLLLGRIIASYDPDNKEERSIAIY) are Extracellular-facing. Residues 123 to 146 (LGIGLCLLFIVRTLLLHPAIFGLH) form a helical membrane-spanning segment. Residues 147–195 (HIGMQMRIAMFSLIYKKTLKLSSRVLDKISIGQLVSLLSNNLNKFDEGL) lie on the Cytoplasmic side of the membrane. A helical membrane pass occupies residues 196-216 (ALAHFVWIVPLQVALLMGLIW). Residues 217 to 222 (ELLQAS) lie on the Extracellular side of the membrane. A helical membrane pass occupies residues 223 to 243 (AFCGLGFLIVLALFQAGLGRM). The Cytoplasmic portion of the chain corresponds to 244 to 298 (MMKYRDQRAGKINERLVITSEMIENIQSVKAYCWEEAMEKMIENLRQTELKLTRK). The chain crosses the membrane as a helical span at residues 299 to 319 (AAYVRYFNSSAFFFSGFFVVF). The Extracellular segment spans residues 320–339 (LSVLPYALIKGIVLRKIFTT). The chain crosses the membrane as a helical span at residues 340–358 (ISFCIVLRMAVTRQFPWAV). Residues 359–858 (QTWYDSLGAI…YLRYITVHKS (500 aa)) lie on the Cytoplasmic side of the membrane. Residues Trp-401, Ser-434, 458 to 465 (GSTGAGKT), and Gln-493 contribute to the ATP site. The region spanning 423-646 (NDDDSLFFSN…RPDFSSKLMG (224 aa)) is the ABC transporter 1 domain. Cys-524 carries the S-palmitoyl cysteine lipid modification. A phosphoserine mark is found at Ser-549 and Ser-660. Residues 654 to 831 (SAERRNSILT…EEINEEDLKE (178 aa)) form a disordered R region region. Position 670 is a phosphoserine; by PKA (Ser-670). Ser-686 bears the Phosphoserine mark. A Glycyl lysine isopeptide (Lys-Gly) (interchain with G-Cter in ubiquitin) cross-link involves residue Lys-688. Phosphoserine is present on residues Ser-700 and Ser-712. Residue Thr-717 is modified to Phosphothreonine. 6 positions are modified to phosphoserine: Ser-737, Ser-753, Ser-768, Ser-790, Ser-795, and Ser-813. The helical transmembrane segment at 859–879 (LIFVLIWCLVIFLAEVAASLV) threads the bilayer. The 297-residue stretch at 859–1155 (LIFVLIWCLV…AVNSSIDVDS (297 aa)) folds into the ABC transmembrane type-1 2 domain. The Extracellular portion of the chain corresponds to 880-918 (VLWFLGNTPPQDKGNSTYSRNNSYAVIITRTSSYYVFYI). N-linked (GlcNAc...) asparagine glycans are attached at residues Asn-894 and Asn-900. The chain crosses the membrane as a discontinuously helical span at residues 919 to 939 (YVGVADTLLAMGFFRGLPLVH). At 940-990 (TLITVSKILHHKMLHSVLQAPMSTLNTLKAGGILNRFSKDIAILDDLLPLT) the chain is on the cytoplasmic side. Residues 991 to 1011 (IFDFIQLLLIVIGAIAVVAVL) form a helical membrane-spanning segment. The Extracellular segment spans residues 1012-1013 (QP). A helical transmembrane segment spans residues 1014-1034 (YIFVATVPVIVAFIMLRAYFL). At 1035-1095 (QTSQQLKQLE…TANWFLYLST (61 aa)) the chain is on the cytoplasmic side. Residues 1096-1116 (LRWFQMRIEMIFVIFFIAVTF) form a helical membrane-spanning segment. The Extracellular portion of the chain corresponds to 1117 to 1130 (ISILTTGEGEGTVG). Residues 1131–1151 (IILTLAMNIMSTLQWAVNSSI) traverse the membrane as a helical segment. The Cytoplasmic portion of the chain corresponds to 1152–1481 (DVDSLMRSVS…TEEEVQDTRL (330 aa)). Residues 1211–1444 (MTVKDLTAKY…RSLFRQAISP (234 aa)) form the ABC transporter 2 domain. Residues Tyr-1220 and 1245-1252 (GRTGSGKS) contribute to the ATP site. Positions 1387–1481 (RTLKQAFADC…TEEEVQDTRL (95 aa)) are interaction with GORASP2. Cys-1396 carries S-palmitoyl cysteine lipidation. Phosphoserine is present on residues Ser-1445 and Ser-1457. The short motif at 1479-1481 (TRL) is the PDZ-binding element.

The protein belongs to the ABC transporter superfamily. ABCC family. CFTR transporter (TC 3.A.1.202) subfamily. Monomer; does not require oligomerization for channel activity. May form oligomers in the membrane. Interacts with SLC26A3, SLC26A6 and NHERF1. Interacts with SHANK2. Interacts with MYO6. Interacts (via C-terminus) with GOPC (via PDZ domain); this promotes CFTR internalization and thereby decreases channel activity. Interacts with SLC4A7 through NHERF1. Found in a complex with MYO5B and RAB11A. Interacts with ANO1. Interacts with SLC26A8. Interacts with AHCYL1; the interaction increases CFTR activity. Interacts with CSE1L. The core-glycosylated form interacts with GORASP2 (via PDZ GRASP-type 1 domain) in respone to ER stress. Interacts with MARCHF2; the interaction leads to CFTR ubiqtuitination and degradation. Interacts with ADGRG2. Post-translationally, N-glycosylated. In terms of processing, phosphorylated; cAMP treatment promotes phosphorylation and activates the channel. Dephosphorylation decreases the ATPase activity (in vitro). Phosphorylation at PKA sites activates the channel. Phosphorylation at PKC sites enhances the response to phosphorylation by PKA. Phosphorylated by AMPK; this inhibits channel activity. Ubiquitinated, leading to its degradation in the lysosome. Deubiquitination by USP10 in early endosomes enhances its endocytic recycling to the cell membrane. Ubiquitinated by RNF185 during ER stress. Ubiquitinated by MARCHF2.

The protein localises to the apical cell membrane. The protein resides in the early endosome membrane. It is found in the cell membrane. Its subcellular location is the recycling endosome membrane. It localises to the endoplasmic reticulum membrane. The protein localises to the nucleus. It carries out the reaction ATP + H2O + closed Cl(-) channel = ADP + phosphate + open Cl(-) channel.. It catalyses the reaction chloride(in) = chloride(out). The enzyme catalyses hydrogencarbonate(in) = hydrogencarbonate(out). The catalysed reaction is ATP + H2O = ADP + phosphate + H(+). Its function is as follows. Epithelial ion channel that plays an important role in the regulation of epithelial ion and water transport and fluid homeostasis. Mediates the transport of chloride ions across the cell membrane. Possesses an intrinsic ATPase activity and utilizes ATP to gate its channel; the passive flow of anions through the channel is gated by cycles of ATP binding and hydrolysis by the ATP-binding domains. The ion channel is also permeable to HCO(3)(-); selectivity depends on the extracellular chloride concentration. Exerts its function also by modulating the activity of other ion channels and transporters. Contributes to the regulation of the pH and the ion content of the epithelial fluid layer. Modulates the activity of the epithelial sodium channel (ENaC) complex, in part by regulating the cell surface expression of the ENaC complex. May regulate bicarbonate secretion and salvage in epithelial cells by regulating the transporter SLC4A7. Can inhibit the chloride channel activity of ANO1. Plays a role in the chloride and bicarbonate homeostasis during sperm epididymal maturation and capacitation. The sequence is that of Cystic fibrosis transmembrane conductance regulator from Macaca fascicularis (Crab-eating macaque).